Here is an 850-residue protein sequence, read N- to C-terminus: Pierisin (850 aa).

3 consecutive Ricin B-type lectin domains span residues 267-409, 413-560, and 564-707; these read GEFM…WNII, FRPI…WDIK, and YQYV…WYLK.

The protein belongs to the pierisin ADP-ribosyltransferase family.

The enzyme catalyses a 2'-deoxyguanosine in DNA + NAD(+) = an N(2)-(ADP-L-ribosyl)-2'-deoxyguanosine in DNA + nicotinamide + H(+). Functionally, ADP-ribosylates double-stranded DNA by targeting the N2 amino group of dG residues. Induces apoptosis in a range of human cell lines. May play a role in destroying cells during pupation and/or defense against parasites. This is Pierisin from Pieris brassicae (White butterfly).